We begin with the raw amino-acid sequence, 259 residues long: Type III pantothenate kinase (259 aa).

Residue D6–T13 participates in ATP binding. G113–R116 is a substrate binding site. D115 acts as the Proton acceptor in catalysis. K(+) is bound at residue D135. T138 is a binding site for ATP. Residue T190 coordinates substrate.

The protein belongs to the type III pantothenate kinase family. As to quaternary structure, homodimer. NH4(+) is required as a cofactor. K(+) serves as cofactor.

The protein localises to the cytoplasm. The enzyme catalyses (R)-pantothenate + ATP = (R)-4'-phosphopantothenate + ADP + H(+). Its pathway is cofactor biosynthesis; coenzyme A biosynthesis; CoA from (R)-pantothenate: step 1/5. Its function is as follows. Catalyzes the phosphorylation of pantothenate (Pan), the first step in CoA biosynthesis. The protein is Type III pantothenate kinase of Endomicrobium trichonymphae.